We begin with the raw amino-acid sequence, 607 residues long: Pyruvate decarboxylase 2 (607 aa).

Positions 1–22 (MDTKIGSIDACNPTNHDIGGPP) are disordered. Substrate is bound by residues aspartate 69 and histidine 156. Residues 434–516 (DSWFNCQKLK…FLINNGGYTI (83 aa)) are thiamine pyrophosphate binding. Positions 484, 511, and 513 each coordinate Mg(2+). Glutamate 517 lines the substrate pocket.

The protein belongs to the TPP enzyme family. In terms of assembly, homotetramer. It depends on a metal cation as a cofactor. Requires thiamine diphosphate as cofactor. As to expression, expressed at low levels in roots, shoots, flowers, siliques and seeds.

The catalysed reaction is a 2-oxocarboxylate + H(+) = an aldehyde + CO2. The chain is Pyruvate decarboxylase 2 (PDC2) from Arabidopsis thaliana (Mouse-ear cress).